Reading from the N-terminus, the 999-residue chain is Caspase recruitment domain-containing protein 14 (999 aa).

The 93-residue stretch at 15-107 (DEEMLWDMLE…DVYTLVTGLQ (93 aa)) folds into the CARD domain. Residues 125 to 411 (TECLAGAISS…QLRRLQAEAP (287 aa)) adopt a coiled-coil conformation. The interval 409–565 (EAPGGPKQEA…RRPARKILSQ (157 aa)) is maintains the protein in an inactive state. A Phosphoserine modification is found at Ser-541. Residues 572 to 655 (QGDALLEQIG…SCYLSVKINT (84 aa)) enclose the PDZ domain. The Guanylate kinase-like domain maps to 803 to 986 (SESCFTLAPY…LLSCVRLAIA (184 aa)).

Interacts (via CARD domain) with BCL10 (via CARD domain). Forms a complex with MALT1 and BCL10; resulting in the formation of a CBM (CARD14-BLC10-MALT1) complex. Interacts with TRAF2, TRAF3 and TRAF6.

It localises to the cytoplasm. Functionally, acts as a scaffolding protein that can activate the inflammatory transcription factor NF-kappa-B and p38/JNK MAP kinase signaling pathways. Forms a signaling complex with BCL10 and MALT1, and activates MALT1 proteolytic activity and inflammatory gene expression. MALT1 is indispensable for CARD14-induced activation of NF-kappa-B and p38/JNK MAP kinases. May play a role in signaling mediated by TRAF2, TRAF3 and TRAF6 and protects cells against apoptosis. The protein is Caspase recruitment domain-containing protein 14 (Card14) of Mus musculus (Mouse).